A 252-amino-acid chain; its full sequence is uncharacterized protein (252 aa).

6 consecutive transmembrane segments (helical) span residues 5–25 (LTSL…IVSF), 29–49 (LALV…GTFI), 61–81 (IAGI…GLYF), 141–161 (ILPS…PGII), 179–199 (WLLL…SKWW), and 217–237 (IGWI…LIQF).

It belongs to the DedA family.

The protein localises to the cell membrane. This is an uncharacterized protein from Buchnera aphidicola subsp. Schizaphis graminum (strain Sg).